Here is a 296-residue protein sequence, read N- to C-terminus: Enoyl-CoA hydratase ACTT3 (296 aa).

The short motif at 294–296 (PKL) is the Peroxisomal targeting signal type 1 element.

It belongs to the enoyl-CoA hydratase/isomerase family.

It is found in the peroxisome. The enzyme catalyses a (3S)-3-hydroxyacyl-CoA = a (2E)-enoyl-CoA + H2O. The catalysed reaction is a 4-saturated-(3S)-3-hydroxyacyl-CoA = a (3E)-enoyl-CoA + H2O. The protein operates within mycotoxin biosynthesis. In terms of biological role, enoyl-CoA hydratase; part of the gene clusters that mediate the biosynthesis of the host-selective toxins (HSTs) ACT-toxins responsible for brown spot of tangerine disease by the tangerine pathotype which affects tangerines and mandarins. ACT-toxins consist of three moieties, 9,10-epoxy-8-hydroxy-9-methyl-decatrienoic acid (EDA), valine and a polyketide. ACT-toxin I is toxic to both citrus and pear; toxin II the 5''-deoxy derivative of ACT-toxin I, is highly toxic to pear and slightly toxic to citrus. On cellular level, ACT-toxins affect plasma membrane of susceptible cells and cause a sudden increase in loss of K(+) after a few minutes of toxin treatment. The acyl-CoA ligase ACTT1, the hydrolase ACTT2, the enoyl-CoA hydratases ACTT3 and ACTT6, and the acyl-CoA synthetase ACTT5 are all involved in the biosynthesis of the AK-, AF- and ACT-toxin common 9,10-epoxy-8-hydroxy-9-methyl-decatrienoic acid (EDA) structural moiety. The exact role of each enzyme, and of additional enzymes identified within the AF-toxin clusters have still to be determined. On the other hand, ACTTS1 to ACTTS4 are specific to the tangerine pathotype. The function of ACTTS3 is to elongate the polyketide chain portion of ACT-toxin that is unique to this toxin. The enoyl-reductase ACTTS2 might complement the missing enoyl-reductase (ER) domain in ACTTS3 in the synthesis of the polyketide portion of ACT-toxin. The roles of the nonribosomal peptide synthetases-related proteins ACTTS1 and ACTTS4 have also still not been elucidated. This chain is Enoyl-CoA hydratase ACTT3, found in Alternaria alternata (Alternaria rot fungus).